Reading from the N-terminus, the 255-residue chain is DNA repair protein RecO (255 aa).

It belongs to the RecO family.

Functionally, involved in DNA repair and RecF pathway recombination. The chain is DNA repair protein RecO from Listeria monocytogenes serotype 4a (strain HCC23).